Here is a 247-residue protein sequence, read N- to C-terminus: Anamorsin homolog (247 aa).

The interval 4-128 (FKGLQKSLYI…ETGSSARLSF (125 aa)) is N-terminal SAM-like domain. A linker region spans residues 129–160 (AKKNASALNVWKISGDDEELIDEEDLLDEEDK). The [2Fe-2S] cluster site is built by Cys171, Cys180, Cys183, and Cys185. A fe-S binding site A region spans residues 171-185 (CSTTGKRKACKNCSC). Positions 208, 211, 219, and 222 each coordinate [4Fe-4S] cluster. Short sequence motifs (cx2C motif) lie at residues 208-211 (CGNC) and 219-222 (CSTC). The fe-S binding site B stretch occupies residues 208–222 (CGNCYLGDAFRCSTC).

It belongs to the anamorsin family. As to quaternary structure, monomer. [2Fe-2S] cluster is required as a cofactor. [4Fe-4S] cluster serves as cofactor.

It is found in the cytoplasm. Its subcellular location is the mitochondrion intermembrane space. Component of the cytosolic iron-sulfur (Fe-S) protein assembly (CIA) machinery. Required for the maturation of extramitochondrial Fe-S proteins. Part of an electron transfer chain functioning in an early step of cytosolic Fe-S biogenesis, facilitating the de novo assembly of a [4Fe-4S] cluster on the cytosolic Fe-S scaffold complex. Electrons are transferred from NADPH via a FAD- and FMN-containing diflavin oxidoreductase. Together with the diflavin oxidoreductase, also required for the assembly of the diferric tyrosyl radical cofactor of ribonucleotide reductase (RNR), probably by providing electrons for reduction during radical cofactor maturation in the catalytic small subunit. The chain is Anamorsin homolog from Drosophila persimilis (Fruit fly).